The chain runs to 383 residues: S-adenosylmethionine synthase (383 aa).

An ATP-binding site is contributed by His-15. Asp-17 contacts Mg(2+). Glu-43 is a K(+) binding site. 2 residues coordinate L-methionine: Glu-56 and Gln-99. Residues Gln-99 to Arg-109 are flexible loop. ATP is bound by residues Asp-164–Lys-166, Arg-230–Phe-231, Asp-239, Arg-245–Lys-246, Ala-262, and Lys-266. Asp-239 contributes to the L-methionine binding site. L-methionine is bound at residue Lys-270.

The protein belongs to the AdoMet synthase family. As to quaternary structure, homotetramer; dimer of dimers. It depends on Mg(2+) as a cofactor. The cofactor is K(+).

Its subcellular location is the cytoplasm. It carries out the reaction L-methionine + ATP + H2O = S-adenosyl-L-methionine + phosphate + diphosphate. Its pathway is amino-acid biosynthesis; S-adenosyl-L-methionine biosynthesis; S-adenosyl-L-methionine from L-methionine: step 1/1. Catalyzes the formation of S-adenosylmethionine (AdoMet) from methionine and ATP. The overall synthetic reaction is composed of two sequential steps, AdoMet formation and the subsequent tripolyphosphate hydrolysis which occurs prior to release of AdoMet from the enzyme. The protein is S-adenosylmethionine synthase of Mannheimia succiniciproducens (strain KCTC 0769BP / MBEL55E).